The sequence spans 315 residues: 4-hydroxy-3-methylbut-2-enyl diphosphate reductase (315 aa).

Cysteine 12 is a [4Fe-4S] cluster binding site. The (2E)-4-hydroxy-3-methylbut-2-enyl diphosphate site is built by histidine 41 and histidine 74. Positions 41 and 74 each coordinate dimethylallyl diphosphate. Histidine 41 and histidine 74 together coordinate isopentenyl diphosphate. [4Fe-4S] cluster is bound at residue cysteine 96. Histidine 124 contributes to the (2E)-4-hydroxy-3-methylbut-2-enyl diphosphate binding site. A dimethylallyl diphosphate-binding site is contributed by histidine 124. Isopentenyl diphosphate is bound at residue histidine 124. Glutamate 126 functions as the Proton donor in the catalytic mechanism. Threonine 168 is a (2E)-4-hydroxy-3-methylbut-2-enyl diphosphate binding site. Cysteine 198 serves as a coordination point for [4Fe-4S] cluster. (2E)-4-hydroxy-3-methylbut-2-enyl diphosphate-binding residues include serine 226, serine 227, asparagine 228, and serine 270. Positions 226, 227, 228, and 270 each coordinate dimethylallyl diphosphate. Isopentenyl diphosphate contacts are provided by serine 226, serine 227, asparagine 228, and serine 270.

The protein belongs to the IspH family. [4Fe-4S] cluster serves as cofactor.

The enzyme catalyses isopentenyl diphosphate + 2 oxidized [2Fe-2S]-[ferredoxin] + H2O = (2E)-4-hydroxy-3-methylbut-2-enyl diphosphate + 2 reduced [2Fe-2S]-[ferredoxin] + 2 H(+). The catalysed reaction is dimethylallyl diphosphate + 2 oxidized [2Fe-2S]-[ferredoxin] + H2O = (2E)-4-hydroxy-3-methylbut-2-enyl diphosphate + 2 reduced [2Fe-2S]-[ferredoxin] + 2 H(+). It participates in isoprenoid biosynthesis; dimethylallyl diphosphate biosynthesis; dimethylallyl diphosphate from (2E)-4-hydroxy-3-methylbutenyl diphosphate: step 1/1. Its pathway is isoprenoid biosynthesis; isopentenyl diphosphate biosynthesis via DXP pathway; isopentenyl diphosphate from 1-deoxy-D-xylulose 5-phosphate: step 6/6. Functionally, catalyzes the conversion of 1-hydroxy-2-methyl-2-(E)-butenyl 4-diphosphate (HMBPP) into a mixture of isopentenyl diphosphate (IPP) and dimethylallyl diphosphate (DMAPP). Acts in the terminal step of the DOXP/MEP pathway for isoprenoid precursor biosynthesis. The protein is 4-hydroxy-3-methylbut-2-enyl diphosphate reductase of Pseudomonas syringae pv. syringae (strain B728a).